We begin with the raw amino-acid sequence, 321 residues long: Biotin synthase (321 aa).

One can recognise a Radical SAM core domain in the interval 45-271 (FFGKKVKLNM…INPSKEIRIA (227 aa)). Positions 63, 67, and 70 each coordinate [4Fe-4S] cluster. Cys106, Cys139, Cys199, and Arg269 together coordinate [2Fe-2S] cluster.

The protein belongs to the radical SAM superfamily. Biotin synthase family. In terms of assembly, homodimer. The cofactor is [4Fe-4S] cluster. [2Fe-2S] cluster serves as cofactor.

The catalysed reaction is (4R,5S)-dethiobiotin + (sulfur carrier)-SH + 2 reduced [2Fe-2S]-[ferredoxin] + 2 S-adenosyl-L-methionine = (sulfur carrier)-H + biotin + 2 5'-deoxyadenosine + 2 L-methionine + 2 oxidized [2Fe-2S]-[ferredoxin]. It functions in the pathway cofactor biosynthesis; biotin biosynthesis; biotin from 7,8-diaminononanoate: step 2/2. In terms of biological role, catalyzes the conversion of dethiobiotin (DTB) to biotin by the insertion of a sulfur atom into dethiobiotin via a radical-based mechanism. This is Biotin synthase from Staphylococcus haemolyticus (strain JCSC1435).